The primary structure comprises 213 residues: Orotate phosphoribosyltransferase (213 aa).

K26 provides a ligand contact to 5-phospho-alpha-D-ribose 1-diphosphate. Residue 34–35 coordinates orotate; the sequence is FF. 5-phospho-alpha-D-ribose 1-diphosphate is bound by residues 72–73, R99, K100, K103, H105, and 124–132; these read YK and DDVITAGTA. Orotate contacts are provided by T128 and R156.

Belongs to the purine/pyrimidine phosphoribosyltransferase family. PyrE subfamily. As to quaternary structure, homodimer. Requires Mg(2+) as cofactor.

It catalyses the reaction orotidine 5'-phosphate + diphosphate = orotate + 5-phospho-alpha-D-ribose 1-diphosphate. Its pathway is pyrimidine metabolism; UMP biosynthesis via de novo pathway; UMP from orotate: step 1/2. Catalyzes the transfer of a ribosyl phosphate group from 5-phosphoribose 1-diphosphate to orotate, leading to the formation of orotidine monophosphate (OMP). This chain is Orotate phosphoribosyltransferase, found in Shigella flexneri.